The following is a 606-amino-acid chain: Aspartate--tRNA(Asp/Asn) ligase (606 aa).

Position 172 (Glu-172) interacts with L-aspartate. The segment at 196 to 199 (QLFK) is aspartate. Position 218 (Arg-218) interacts with L-aspartate. Residues 218–220 (RDE) and Gln-227 contribute to the ATP site. His-448 provides a ligand contact to L-aspartate. Glu-482 serves as a coordination point for ATP. Arg-489 is an L-aspartate binding site. 534–537 (GWDR) contacts ATP.

Belongs to the class-II aminoacyl-tRNA synthetase family. Type 1 subfamily. Homodimer.

It localises to the cytoplasm. It catalyses the reaction tRNA(Asx) + L-aspartate + ATP = L-aspartyl-tRNA(Asx) + AMP + diphosphate. Its function is as follows. Aspartyl-tRNA synthetase with relaxed tRNA specificity since it is able to aspartylate not only its cognate tRNA(Asp) but also tRNA(Asn). Reaction proceeds in two steps: L-aspartate is first activated by ATP to form Asp-AMP and then transferred to the acceptor end of tRNA(Asp/Asn). This is Aspartate--tRNA(Asp/Asn) ligase from Saccharopolyspora erythraea (strain ATCC 11635 / DSM 40517 / JCM 4748 / NBRC 13426 / NCIMB 8594 / NRRL 2338).